A 680-amino-acid polypeptide reads, in one-letter code: DNA-directed RNA polymerase subunit beta' (680 aa).

Zn(2+) is bound by residues cysteine 69, cysteine 71, cysteine 87, and cysteine 90. Positions 489, 491, and 493 each coordinate Mg(2+).

This sequence belongs to the RNA polymerase beta' chain family. RpoC1 subfamily. In plastids the minimal PEP RNA polymerase catalytic core is composed of four subunits: alpha, beta, beta', and beta''. When a (nuclear-encoded) sigma factor is associated with the core the holoenzyme is formed, which can initiate transcription. Mg(2+) serves as cofactor. It depends on Zn(2+) as a cofactor.

Its subcellular location is the plastid. It is found in the chloroplast. It carries out the reaction RNA(n) + a ribonucleoside 5'-triphosphate = RNA(n+1) + diphosphate. In terms of biological role, DNA-dependent RNA polymerase catalyzes the transcription of DNA into RNA using the four ribonucleoside triphosphates as substrates. The chain is DNA-directed RNA polymerase subunit beta' from Arabis hirsuta (Hairy rock-cress).